We begin with the raw amino-acid sequence, 376 residues long: Dual-specificity RNA methyltransferase RlmN (376 aa).

Residue glutamate 96 is the Proton acceptor of the active site. A Radical SAM core domain is found at 102 to 341 (DEDRATLCVS…VVVRKTRGDD (240 aa)). A disulfide bridge connects residues cysteine 109 and cysteine 346. The [4Fe-4S] cluster site is built by cysteine 116, cysteine 120, and cysteine 123. S-adenosyl-L-methionine-binding positions include 170–171 (GE), serine 202, 224–226 (SLH), and asparagine 303. Residue cysteine 346 is the S-methylcysteine intermediate of the active site.

It belongs to the radical SAM superfamily. RlmN family. [4Fe-4S] cluster is required as a cofactor.

The protein resides in the cytoplasm. It catalyses the reaction adenosine(2503) in 23S rRNA + 2 reduced [2Fe-2S]-[ferredoxin] + 2 S-adenosyl-L-methionine = 2-methyladenosine(2503) in 23S rRNA + 5'-deoxyadenosine + L-methionine + 2 oxidized [2Fe-2S]-[ferredoxin] + S-adenosyl-L-homocysteine. The catalysed reaction is adenosine(37) in tRNA + 2 reduced [2Fe-2S]-[ferredoxin] + 2 S-adenosyl-L-methionine = 2-methyladenosine(37) in tRNA + 5'-deoxyadenosine + L-methionine + 2 oxidized [2Fe-2S]-[ferredoxin] + S-adenosyl-L-homocysteine. In terms of biological role, specifically methylates position 2 of adenine 2503 in 23S rRNA and position 2 of adenine 37 in tRNAs. m2A2503 modification seems to play a crucial role in the proofreading step occurring at the peptidyl transferase center and thus would serve to optimize ribosomal fidelity. This chain is Dual-specificity RNA methyltransferase RlmN, found in Pseudoalteromonas atlantica (strain T6c / ATCC BAA-1087).